A 1093-amino-acid polypeptide reads, in one-letter code: Semaphorin-5B (1093 aa).

A signal peptide spans 1-19; the sequence is MVVPGPLALSLLLSSLTLL. The Extracellular segment spans residues 20–978; sequence VSHLSSSQDI…TSCGGFNLIH (959 aa). In terms of domain architecture, Sema spans 45–495; the sequence is HPIVAFEDLK…LSDRVLRVPL (451 aa). 2 N-linked (GlcNAc...) asparagine glycosylation sites follow: Asn-59 and Asn-95. 2 disulfides stabilise this stretch: Cys-114–Cys-124 and Cys-141–Cys-150. 3 N-linked (GlcNAc...) asparagine glycosylation sites follow: Asn-157, Asn-178, and Asn-287. 2 disulfides stabilise this stretch: Cys-264–Cys-367 and Cys-288–Cys-330. 6 N-linked (GlcNAc...) asparagine glycosylation sites follow: Asn-333, Asn-378, Asn-532, Asn-539, Asn-547, and Asn-602. TSP type-1 domains are found at residues 551-605, 606-662, 664-713, 721-776, 795-850, 852-907, and 908-952; these read DGGF…NCSR, NGAW…TPCP, PIFW…EACP, WTPW…ACDT, NGGW…QACP, RGAW…QACP, and EGWS…RPCP. Cystine bridges form between Cys-618/Cys-655, Cys-622/Cys-661, Cys-633/Cys-645, Cys-676/Cys-707, Cys-680/Cys-712, and Cys-691/Cys-697. An N-linked (GlcNAc...) asparagine glycan is attached at Asn-728. Cystine bridges form between Cys-807–Cys-844, Cys-811–Cys-849, Cys-822–Cys-834, Cys-864–Cys-901, Cys-868–Cys-906, and Cys-879–Cys-891. A glycan (N-linked (GlcNAc...) asparagine) is linked at Asn-944. The helical transmembrane segment at 979-999 threads the bilayer; the sequence is LIVTGVSCFLVSGLLTLAVYL. The Cytoplasmic segment spans residues 1000–1093; the sequence is SCQHCQRQSQ…SPGQRCFPNS (94 aa).

Belongs to the semaphorin family. As to expression, in adult, only detected in brain.

It localises to the membrane. Functionally, may act as a positive axonal guidance cue. The polypeptide is Semaphorin-5B (Sema5b) (Mus musculus (Mouse)).